The sequence spans 173 residues: Small ribosomal subunit protein mS25 (173 aa).

The protein belongs to the mitochondrion-specific ribosomal protein mS25 family. Component of the mitochondrial small ribosomal subunit (mt-SSU). Mature mammalian 55S mitochondrial ribosomes consist of a small (28S) and a large (39S) subunit. The 28S small subunit contains a 12S ribosomal RNA (12S mt-rRNA) and 30 different proteins. The 39S large subunit contains a 16S rRNA (16S mt-rRNA), a copy of mitochondrial valine transfer RNA (mt-tRNA(Val)), which plays an integral structural role, and 52 different proteins.

It localises to the mitochondrion. This is Small ribosomal subunit protein mS25 (MRPS25) from Homo sapiens (Human).